A 128-amino-acid polypeptide reads, in one-letter code: uncharacterized protein (128 aa).

A disordered region spans residues 1 to 50; that stretch reads MSNEQGKGMGFFGNKGKPASEKKDEKKTKLDLDYKPDLNPSTPYDPTLPV. The segment covering 18–36 has biased composition (basic and acidic residues); that stretch reads PASEKKDEKKTKLDLDYKP.

This is an uncharacterized protein from Bacillus anthracis.